The primary structure comprises 478 residues: H(+)/Cl(-) exchange transporter ClcA (478 aa).

At 1–32 the chain is on the cytoplasmic side; sequence MTHSTQQLSPEGVAEGKRGRLIRELVNRDKTP. Residues 33–69 traverse the membrane as a helical segment; the sequence is LIILIMAAVVGVVTGLLGVAFDRGVDWVQQQRLLALA. Over 70-76 the chain is Periplasmic; it reads NVADYAL. A helical transmembrane segment spans residues 77-100; sequence LVWPLAFIMSALLAMMGYFLVSRF. A Selectivity filter part_1 motif is present at residues 106 to 110; the sequence is GSGIP. Residue Ser107 coordinates chloride. Residues 109 to 116 constitute an intramembrane region (helical); the sequence is IPEIEGAM. Residues 117 to 123 are Cytoplasmic-facing; sequence EEMRPVR. 2 consecutive transmembrane segments (helical) span residues 124-141 and 148-166; these read WWRV…TLGA and EGPM…VDIF. The Selectivity filter part_2 motif lies at 146-150; the sequence is GREGP. Over 167 to 176 the chain is Cytoplasmic; it reads RLRSPEARHS. Intramembrane regions (helical) lie at residues 177-189 and 193-201; these read LLAT…LSAA and PLAGILFVI. Residues 202–214 are Cytoplasmic-facing; sequence EEMRSQFRYSLVS. A helical transmembrane segment spans residues 215 to 232; the sequence is IKAVFIGVITSTIVYRYF. The Periplasmic segment spans residues 233 to 252; sequence NGERAIIEVGKLSDAPLNTL. Residues 253–281 traverse the membrane as a helical segment; that stretch reads WLYLLLGIIFGAVGVIFNALIFRTQDMFV. At 282–287 the chain is on the cytoplasmic side; that stretch reads RFHGGD. The helical transmembrane segment at 288–309 threads the bilayer; sequence WRKLVLIGGLLGGMCGLLALLH. Over 310-329 the chain is Periplasmic; that stretch reads GNAVGGGFALIPIAAAGNFS. The next 2 membrane-spanning stretches (helical) occupy residues 330 to 349 and 355 to 376; these read IGML…LCFG and GIFA…LSCA. The Selectivity filter part_3 signature appears at 355-359; it reads GIFAP. Positions 356 and 357 each coordinate chloride. The Periplasmic segment spans residues 377-386; it reads HFFPQYGIEA. An intramembrane region (helical) is located at residues 387-401; that stretch reads GTFAIAGMGALFAAS. Positions 402-404 form an intramembrane region, note=Loop between two helices; that stretch reads VRA. Positions 405 to 416 form an intramembrane region, helical; the sequence is PLTGIVLVLEMT. The segment at residues 417 to 421 is an intramembrane region (note=Loop between two helices); it reads DNYQL. Residues 422–438 form a helical membrane-spanning segment; that stretch reads ILPMIVTCLGATLIAQF. At 439–478 the chain is on the cytoplasmic side; sequence MGGKPLYSAILARTLAKQEQARATVIAQEPAVENTPQIGK. Tyr445 is a chloride binding site.

The protein belongs to the chloride channel (TC 2.A.49) family. ClcA subfamily. As to quaternary structure, homodimer.

The protein localises to the cell inner membrane. The enzyme catalyses 2 chloride(in) + H(+)(out) = 2 chloride(out) + H(+)(in). Functionally, proton-coupled chloride transporter. Functions as antiport system and exchanges two chloride ions for 1 proton. Probably acts as an electrical shunt for an outwardly-directed proton pump that is linked to amino acid decarboxylation, as part of the extreme acid resistance (XAR) response. The polypeptide is H(+)/Cl(-) exchange transporter ClcA (Yersinia pestis bv. Antiqua (strain Antiqua)).